A 923-amino-acid polypeptide reads, in one-letter code: Neuropilin-1a (923 aa).

An N-terminal signal peptide occupies residues 1-19 (MHCGLVLILFTGIFLIVSA). Over 20–856 (LKNDKCGDNI…AGNMLKTLDP (837 aa)) the chain is Extracellular. Intrachain disulfides connect Cys25–Cys52, Cys80–Cys102, and Cys145–Cys171. CUB domains follow at residues 25–139 (CGDN…YEIF) and 145–263 (CSRN…FTVL). Asn148 carries an N-linked (GlcNAc...) asparagine glycan. Residues Glu193, Asp207, and Asp248 each contribute to the Ca(2+) site. An intrachain disulfide couples Cys204 to Cys226. N-linked (GlcNAc...) asparagine glycosylation is present at Asn259. 2 disulfide bridges follow: Cys273-Cys422 and Cys429-Cys581. F5/8 type C domains lie at 273 to 422 (CTEP…VYGC) and 429 to 581 (CSGM…LLGC). A glycan (N-linked (GlcNAc...) asparagine) is linked at Asn520. Residues 587–624 (TVPPTTPAASTTPSDECDDDQANCHSGTGDGYDQTGGT) form a disordered region. A glycan (O-linked (Xyl...) (chondroitin sulfate) serine; alternate) is linked at Ser612. Ser612 is a glycosylation site (O-linked (Xyl...) (heparan sulfate) serine; alternate). The MAM domain occupies 642–811 (FACDFGWAND…DNVNMADCKD (170 aa)). A helical membrane pass occupies residues 857-877 (ILITIIAMSALGVFLGAICGV). The Cytoplasmic segment spans residues 878-923 (VLYCACSHSGMSDRNLSALENYNFELVDGVKLKKDKLNSQNSYSEA).

It belongs to the neuropilin family.

Its subcellular location is the membrane. In terms of biological role, receptor involved in the development of the cardiovascular system, in angiogenesis, in the formation of certain neuronal circuits and in organogenesis outside the nervous system. It mediates the chemorepulsant activity of semaphorins. Regulates angiogenesis through a VEGF-dependent pathway. This is Neuropilin-1a (nrp1a) from Danio rerio (Zebrafish).